We begin with the raw amino-acid sequence, 827 residues long: Cadherin-17 (827 aa).

An N-terminal signal peptide occupies residues 1–25; sequence MVSAQLHFLCLLTLYLTCGYGEEGK. Residues 26–786 lie on the Extracellular side of the membrane; sequence FSGPLKPMTF…RQDGIPTVGM (761 aa). 7 consecutive Cadherin domains span residues 29–127, 128–243, 244–339, 340–448, 449–565, 566–666, and 667–776; these read PLKP…TFLQ, SKYE…APEP, VEIR…PPTC, LSPV…IPIF, ETSN…VPVF, PQRI…PPRL, and AKDY…RPAG. Asn148, Asn249, Asn418, Asn545, Asn573, Asn586, and Asn721 each carry an N-linked (GlcNAc...) asparagine glycan. A helical membrane pass occupies residues 787–807; that stretch reads AVGILLTTFLVIGIILAVVFI. Over 808–827 the chain is Cytoplasmic; the sequence is RMRKDKVENPQSPENKPLRS.

As to expression, highest expression is found in intestine with lower expression in spleen, bone marrow, lung and testis. No expression detected in liver, kidney, heart, brain or skeletal muscle. Expressed in precursor B-cells and myeloid cells.

It localises to the cell membrane. In terms of biological role, cadherins are calcium-dependent cell adhesion proteins. They preferentially interact with themselves in a homophilic manner in connecting cells; cadherins may thus contribute to the sorting of heterogeneous cell types. LI-cadherin may have a role in the morphological organization of liver and intestine. This chain is Cadherin-17 (Cdh17), found in Mus musculus (Mouse).